The primary structure comprises 326 residues: Polycomb complex protein BMI-1 (326 aa).

The segment at 18 to 57 (CVLCGGYFIDATTIIECLHSFCKTCIVRYLETSKYCPICD) adopts an RING-type zinc-finger fold. The short motif at 81–95 (KLVPGLFKNEMKRRR) is the Nuclear localization signal element. The interaction with PHC2 stretch occupies residues 162–182 (RYLRCPAAMTVMHLRKFLRSK). The tract at residues 164–228 (LRCPAAMTVM…GPLPLKYRVR (65 aa)) is interaction with E4F1. The interval 236-326 (ISHQRDGLTN…VNGSSATSSG (91 aa)) is disordered. 3 stretches are compositionally biased toward low complexity: residues 266 to 278 (PSTS…PSTP), 290 to 303 (SSTM…PSGN), and 315 to 326 (SSVNGSSATSSG).

In terms of assembly, component of a PRC1-like complex. Identified in a PRC1-like HPRC-H complex with CBX2, CBX4, CBX8, PHC1, PHC2, PHC3 RING1 and RNF2. Interacts with RNF2/RING2. Interacts with RING1. Part of a complex that contains RNF2, UB2D3 and BMI1, where RNF2 and BMI1 form a tight heterodimer, and UB2D3 interacts only with RNF2. The complex composed of RNF2, UB2D3 and BMI1 binds nucleosomes, and has activity only with nucleosomal histone H2A. Interacts with CBX7 and CBX8. Interacts with SPOP. Part of a complex consisting of BMI1, CUL3 and SPOP. Interacts with E4F1. Interacts with PHC2. Interacts with zinc finger protein ZNF277. May be part of a complex including at least ZNF277, BMI1 and RNF2/RING2. May be polyubiquitinated; which does not lead to proteasomal degradation. Monoubiquitinated.

It is found in the nucleus. It localises to the cytoplasm. Its function is as follows. Component of a Polycomb group (PcG) multiprotein PRC1-like complex, a complex class required to maintain the transcriptionally repressive state of many genes, including Hox genes, throughout development. PcG PRC1 complex acts via chromatin remodeling and modification of histones; it mediates monoubiquitination of histone H2A 'Lys-119', rendering chromatin heritably changed in its expressibility. The complex composed of RNF2, UB2D3 and BMI1 binds nucleosomes, and has activity only with nucleosomal histone H2A. In the PRC1-like complex, regulates the E3 ubiquitin-protein ligase activity of RNF2/RING2. The protein is Polycomb complex protein BMI-1 (BMI1) of Bos taurus (Bovine).